Consider the following 285-residue polypeptide: Acetyl-coenzyme A carboxylase carboxyl transferase subunit beta (285 aa).

Residues 33-285 (MWIKCSKCGK…TLGNILRMHS (253 aa)) enclose the CoA carboxyltransferase N-terminal domain. The Zn(2+) site is built by Cys-37, Cys-40, Cys-56, and Cys-59. The C4-type zinc finger occupies 37 to 59 (CSKCGKILYKSDVDDNFKVCPKC).

It belongs to the AccD/PCCB family. Acetyl-CoA carboxylase is a heterohexamer composed of biotin carboxyl carrier protein (AccB), biotin carboxylase (AccC) and two subunits each of ACCase subunit alpha (AccA) and ACCase subunit beta (AccD). Zn(2+) serves as cofactor.

It localises to the cytoplasm. The catalysed reaction is N(6)-carboxybiotinyl-L-lysyl-[protein] + acetyl-CoA = N(6)-biotinyl-L-lysyl-[protein] + malonyl-CoA. It functions in the pathway lipid metabolism; malonyl-CoA biosynthesis; malonyl-CoA from acetyl-CoA: step 1/1. Functionally, component of the acetyl coenzyme A carboxylase (ACC) complex. Biotin carboxylase (BC) catalyzes the carboxylation of biotin on its carrier protein (BCCP) and then the CO(2) group is transferred by the transcarboxylase to acetyl-CoA to form malonyl-CoA. The protein is Acetyl-coenzyme A carboxylase carboxyl transferase subunit beta of Clostridium acetobutylicum (strain ATCC 824 / DSM 792 / JCM 1419 / IAM 19013 / LMG 5710 / NBRC 13948 / NRRL B-527 / VKM B-1787 / 2291 / W).